Here is a 395-residue protein sequence, read N- to C-terminus: Putative ankyrin repeat protein RF_0950 (395 aa).

7 ANK repeats span residues 3-32 (YQKE…NPNT), 36-65 (YGKL…DPNA), 69-98 (IKDP…NPNV), 101-130 (RHEN…DPNQ), 134-166 (NGNT…EKAL), 172-201 (NGET…TVNI), and 205-234 (AGNT…ELNE). A Glutamine amidotransferase type-1 domain is found at 272 to 395 (KTKLIYQGGD…YLKVPILKEK (124 aa)). C377 (nucleophile) is an active-site residue.

This Rickettsia felis (strain ATCC VR-1525 / URRWXCal2) (Rickettsia azadi) protein is Putative ankyrin repeat protein RF_0950.